The primary structure comprises 409 residues: Elongation factor Tu (409 aa).

Residues 10 to 214 form the tr-type G domain; sequence KPHVNVGTIG…AVDNYIPTPE (205 aa). Residues 19-26 are G1; that stretch reads GHVDHGKT. Position 19–26 (19–26) interacts with GTP; the sequence is GHVDHGKT. T26 lines the Mg(2+) pocket. The interval 60–64 is G2; that stretch reads GITIN. The interval 81-84 is G3; the sequence is DCPG. Residues 81-85 and 136-139 contribute to the GTP site; these read DCPGH and NKVD. The G4 stretch occupies residues 136–139; that stretch reads NKVD. Residues 174 to 176 are G5; that stretch reads SGL.

The protein belongs to the TRAFAC class translation factor GTPase superfamily. Classic translation factor GTPase family. EF-Tu/EF-1A subfamily. In terms of assembly, monomer.

The protein resides in the cytoplasm. It catalyses the reaction GTP + H2O = GDP + phosphate + H(+). GTP hydrolase that promotes the GTP-dependent binding of aminoacyl-tRNA to the A-site of ribosomes during protein biosynthesis. The chain is Elongation factor Tu from Thermosynechococcus vestitus (strain NIES-2133 / IAM M-273 / BP-1).